Here is a 772-residue protein sequence, read N- to C-terminus: Mitochondrial intermediate peptidase (772 aa).

Residues 1-37 (MLRTIILKAGSNASIPSPSRQNKLLRFFATAGAVSRT) constitute a mitochondrion transit peptide. Histidine 558 provides a ligand contact to Zn(2+). Residue glutamate 559 is part of the active site. Positions 562 and 587 each coordinate Zn(2+).

It belongs to the peptidase M3 family. Zn(2+) serves as cofactor.

The protein localises to the mitochondrion matrix. It carries out the reaction Release of an N-terminal octapeptide as second stage of processing of some proteins imported into the mitochondrion.. With respect to regulation, stimulated by Fe(2+). In terms of biological role, cleaves proteins, imported into the mitochondrion, to their mature size. While most mitochondrial precursor proteins are processed to the mature form in one step by mitochondrial processing peptidase (MPP), the sequential cleavage by MIP of an octapeptide after initial processing by MPP is a required step for a subgroup of nuclear-encoded precursor proteins destined for the matrix or the inner membrane. Cleaves precursor proteins of respiratory components, including subunits of the electron transport chain and tricarboxylic acid cycle enzymes, and components of the mitochondrial genetic machinery, including ribosomal proteins, translation factors, and proteins required for mitochondrial DNA metabolism. In Saccharomyces cerevisiae (strain ATCC 204508 / S288c) (Baker's yeast), this protein is Mitochondrial intermediate peptidase (OCT1).